Consider the following 347-residue polypeptide: Phosphoribosylformylglycinamidine cyclo-ligase (347 aa).

This sequence belongs to the AIR synthase family.

It localises to the cytoplasm. It carries out the reaction 2-formamido-N(1)-(5-O-phospho-beta-D-ribosyl)acetamidine + ATP = 5-amino-1-(5-phospho-beta-D-ribosyl)imidazole + ADP + phosphate + H(+). It participates in purine metabolism; IMP biosynthesis via de novo pathway; 5-amino-1-(5-phospho-D-ribosyl)imidazole from N(2)-formyl-N(1)-(5-phospho-D-ribosyl)glycinamide: step 2/2. The polypeptide is Phosphoribosylformylglycinamidine cyclo-ligase (Desulfatibacillum aliphaticivorans).